Here is a 303-residue protein sequence, read N- to C-terminus: Putative HTH-type transcriptional regulatory protein Mpal_0031 (303 aa).

The region spanning 132–189 (LRGLREQRNMSLGDLGAVLGVSRRTISKYESGMGTTLEIAIKIEEVFDSGVIESIDLL) is the HTH cro/C1-type domain. The segment at residues 143–162 (LGDLGAVLGVSRRTISKYES) is a DNA-binding region (H-T-H motif).

This chain is Putative HTH-type transcriptional regulatory protein Mpal_0031, found in Methanosphaerula palustris (strain ATCC BAA-1556 / DSM 19958 / E1-9c).